Reading from the N-terminus, the 255-residue chain is Methylthioribulose-1-phosphate dehydratase (255 aa).

C98 contacts substrate. 2 residues coordinate Zn(2+): H116 and H118. Residue E150 is the Proton donor/acceptor of the active site. Residue H207 coordinates Zn(2+).

Belongs to the aldolase class II family. MtnB subfamily. Zn(2+) is required as a cofactor.

Its subcellular location is the cytoplasm. It carries out the reaction 5-(methylsulfanyl)-D-ribulose 1-phosphate = 5-methylsulfanyl-2,3-dioxopentyl phosphate + H2O. Its pathway is amino-acid biosynthesis; L-methionine biosynthesis via salvage pathway; L-methionine from S-methyl-5-thio-alpha-D-ribose 1-phosphate: step 2/6. Catalyzes the dehydration of methylthioribulose-1-phosphate (MTRu-1-P) into 2,3-diketo-5-methylthiopentyl-1-phosphate (DK-MTP-1-P). The protein is Methylthioribulose-1-phosphate dehydratase of Pyricularia oryzae (strain 70-15 / ATCC MYA-4617 / FGSC 8958) (Rice blast fungus).